The sequence spans 377 residues: Nitric oxide reductase FlRd-NAD(+) reductase (377 aa).

This sequence belongs to the FAD-dependent oxidoreductase family. Requires FAD as cofactor.

It localises to the cytoplasm. The catalysed reaction is 2 reduced [nitric oxide reductase rubredoxin domain] + NAD(+) + H(+) = 2 oxidized [nitric oxide reductase rubredoxin domain] + NADH. It participates in nitrogen metabolism; nitric oxide reduction. One of at least two accessory proteins for anaerobic nitric oxide (NO) reductase. Reduces the rubredoxin moiety of NO reductase. The sequence is that of Nitric oxide reductase FlRd-NAD(+) reductase from Escherichia coli O6:K15:H31 (strain 536 / UPEC).